The sequence spans 543 residues: Chaperonin GroEL (543 aa).

Residues 29 to 32 (TVGP), 86 to 90 (DGTTT), Gly-413, and Asp-504 each bind ATP.

Belongs to the chaperonin (HSP60) family. As to quaternary structure, forms a cylinder of 14 subunits composed of two heptameric rings stacked back-to-back. Interacts with the co-chaperonin GroES.

The protein resides in the cytoplasm. The enzyme catalyses ATP + H2O + a folded polypeptide = ADP + phosphate + an unfolded polypeptide.. Its function is as follows. Together with its co-chaperonin GroES, plays an essential role in assisting protein folding. The GroEL-GroES system forms a nano-cage that allows encapsulation of the non-native substrate proteins and provides a physical environment optimized to promote and accelerate protein folding. The polypeptide is Chaperonin GroEL (Mycoplasma pneumoniae (strain ATCC 29342 / M129 / Subtype 1) (Mycoplasmoides pneumoniae)).